Reading from the N-terminus, the 554-residue chain is uncharacterized protein (554 aa).

This sequence to M.jannaschii MJ0047, MJ0162 and MJ1236.

This is an uncharacterized protein from Synechocystis sp. (strain ATCC 27184 / PCC 6803 / Kazusa).